A 373-amino-acid chain; its full sequence is Ubiquitin domain-containing protein DSK2 (373 aa).

In terms of domain architecture, Ubiquitin-like spans M1 to K76. Glycyl lysine isopeptide (Lys-Gly) (interchain with G-Cter in ubiquitin) cross-links involve residues K13 and K76. A disordered region spans residues D221 to A270. Residues G231–A270 show a composition bias toward low complexity. The 45-residue stretch at P327 to G371 folds into the UBA domain.

The protein localises to the nucleus. Functionally, involved, with RAD23 in spindle pole body duplication. Involved in the ubiquitin-proteasome proteolytic pathway. The protein is Ubiquitin domain-containing protein DSK2 (DSK2) of Saccharomyces cerevisiae (strain ATCC 204508 / S288c) (Baker's yeast).